A 131-amino-acid chain; its full sequence is Superoxide dismutase [Ni] (131 aa).

Positions 1 to 14 are excised as a propeptide; that stretch reads MLSRLFAPKVKVSA. Positions 15, 16, and 20 each coordinate Ni(2+).

It belongs to the nickel superoxide dismutase family. Homohexamer. The hexameric protein has roughly the shape of a hollow sphere with an outer diameter of 72 Angstroms and a large inner cavity. Ni(2+) serves as cofactor.

The protein localises to the cytoplasm. The enzyme catalyses 2 superoxide + 2 H(+) = H2O2 + O2. This chain is Superoxide dismutase [Ni] (sodN), found in Streptomyces seoulensis.